The sequence spans 278 residues: MSLRLPSLSFTWLTRLSWSWRFTWVYLTLILFIPIIALFLKSASLPLGRIWELATQPVAVAAYEVTFGLSLAAAALNGVFGVIIAWVLTRYDFPGKKLFDSFIDLPFALPTAVAGLTLATVYSDKGWIGQFIAPFGVQIAFTRWGVLLAMVFISLPFVVRTVEPLLLELEVEAEEAAASLGASPSETFWRVILPPILPGVLAGVAQGFSRAVGEFGSVVIISGNLPFDDLIAPVLIFERLEQYDYAGATVIGSVLLLFSLVILFVINALQNWSSRYNG.

7 helical membrane passes run 22 to 42 (FTWVYLTLILFIPIIALFLKS), 67 to 87 (FGLSLAAAALNGVFGVIIAWV), 102 to 122 (FIDLPFALPTAVAGLTLATVY), 139 to 159 (IAFTRWGVLLAMVFISLPFVV), 188 to 208 (FWRVILPPILPGVLAGVAQGF), 217 to 237 (SVVIISGNLPFDDLIAPVLIF), and 246 to 266 (AGATVIGSVLLLFSLVILFVI). Positions 63–266 (YEVTFGLSLA…LFSLVILFVI (204 aa)) constitute an ABC transmembrane type-1 domain.

Belongs to the binding-protein-dependent transport system permease family. CysTW subfamily. As to quaternary structure, the complex is composed of two ATP-binding proteins (CysA), two transmembrane proteins (CysT and CysW) and a solute-binding protein (CysP).

It localises to the cell inner membrane. Part of the ABC transporter complex CysAWTP (TC 3.A.1.6.1) involved in sulfate/thiosulfate import. Probably responsible for the translocation of the substrate across the membrane. This chain is Sulfate transport system permease protein CysT (cysT), found in Synechococcus elongatus (strain ATCC 33912 / PCC 7942 / FACHB-805) (Anacystis nidulans R2).